We begin with the raw amino-acid sequence, 636 residues long: C-terminal binding protein AN (636 aa).

The segment at 1–21 is disordered; sequence MSKIRSSATMPHRDQPSPASP. Residues Ser-91, 147–148, 169–174, Asp-193, 231–237, 258–260, Asp-284, and 307–311 each bind NAD(+); these read WL, VGRSVS, CALTNDT, TGS, and RSADY. A disordered region spans residues 341 to 489; it reads VSDEEVEESE…PLEVMQESSP (149 aa). Residues 342–357 show a composition bias toward acidic residues; the sequence is SDEEVEESEASEEEEQ. A compositionally biased stretch (polar residues) spans 369–384; that stretch reads ESTSRQQGESTLTSTE. The segment covering 385–395 has biased composition (basic and acidic residues); sequence IVRREASELKE. Residues 398–409 are compositionally biased toward polar residues; the sequence is SPGQQHVSQNTA. A compositionally biased stretch (basic residues) spans 417–429; that stretch reads SRSGKKAKKRHSQ. Residues 430–445 are compositionally biased toward polar residues; that stretch reads QKYMQKTDGSSGLNEE. The span at 470–480 shows a compositional bias: basic and acidic residues; it reads SPEDSRSRKTP.

This sequence belongs to the D-isomer specific 2-hydroxyacid dehydrogenase family. Plant AN subfamily. Homodimer. Interacts with KCBP and SUB (via intra-cellular domain); AN is not required for the correct subcellular localization and recycling of SUB. Binds to SOKs proteins polymers (e.g. SOK1, SOK2, SOK3 and SOK4). Interacts with IPGA1 on microtubule upon mechanical stress to regulate microtubule organization. The cofactor is NAD(+). In terms of tissue distribution, expressed in cotyledons, leaves, roots, stems and floral buds.

It localises to the cytoplasm. Its subcellular location is the golgi apparatus. It is found in the trans-Golgi network. The protein localises to the cytoskeleton. Functionally, involved in controlling the equilibrium between tubular and stacked structures in the Golgi complex. Required for cortical microtubules (MTs) arrangement that confers cell shape. Cooperatively with IPGA1, negatively regulates cortical microtubules (CMTs) organization in response to mechanical stress and modulates pavement cells morphogenesis leading to puzzle shape, probably in an AAA1/KTN1-dependent manner. Regulates the width of leaves by controlling the polar elongation of leaf cells. Involved in the regulation of trichome branching. Seems to not be able to regulate gene transcription. Regulates epidermal cell divisions and elongation in a non-cell-autonomous manner (regulated by subepidermal cells), but regulates epidermal cell polarity, shape, trichome branching and elongation in a cell-autonomous manner. Negatively regulates growth in the petiole elongation. Prevents lipid peroxidation as a result of abiotic stress response. Is involved in the SUB-dependent signaling mechanism and may act in a membrane trafficking event around the trans-Golgi network. The protein is C-terminal binding protein AN of Arabidopsis thaliana (Mouse-ear cress).